Reading from the N-terminus, the 90-residue chain is Acylphosphatase (90 aa).

An Acylphosphatase-like domain is found at 5–90; the sequence is CLKAWVTGRV…DPPPGTFELG (86 aa). Residues R20 and N38 contribute to the active site.

Belongs to the acylphosphatase family.

The catalysed reaction is an acyl phosphate + H2O = a carboxylate + phosphate + H(+). In Chromohalobacter salexigens (strain ATCC BAA-138 / DSM 3043 / CIP 106854 / NCIMB 13768 / 1H11), this protein is Acylphosphatase (acyP).